The following is a 635-amino-acid chain: Early transcription factor 70 kDa subunit (635 aa).

A Helicase ATP-binding domain is found at 32–185 (RSIIDENKSV…SNIISLMSDE (154 aa)). 45–52 (HIMGSGKT) contacts ATP. Positions 135–138 (DEAH) match the DEXH box motif. The 180-residue stretch at 326-505 (KFKYFITKIE…TLPFDIKKLL (180 aa)) folds into the Helicase C-terminal domain.

This sequence belongs to the helicase family. VETF subfamily. In terms of assembly, heterodimer of a 70 kDa and a 82 kDa subunit. Part of the early transcription complex composed of ETF, RAP94, and the DNA-directed RNA polymerase.

Its subcellular location is the virion. Acts with RNA polymerase to initiate transcription from early gene promoters. Is recruited by the RPO-associated protein of 94 kDa (RAP94) to form the early transcription complex, which also contains the core RNA polymerase. ETF heterodimer binds to early gene promoters. This Oryctolagus cuniculus (Rabbit) protein is Early transcription factor 70 kDa subunit (VETFS).